A 248-amino-acid chain; its full sequence is MVRHSKNILPKTTNPNPESNRYPPHPADPSHPSRYHLHLQAHHLRSPLLSASAENRRRDPQNLSTTKATSPSTHQSPILPDDIHSILPFAHMNITHTTGQHTENSIRAPSSTTILWHSCQLHSQPSSISSSTKIVSGRVLFSDSSPCSSNPHTQQPSIFSCPTLAGRKLESSGSIFLSTTLPSFIVSIVYLLSVSCRLVPGQTAFTNTNSSVLIDIPILLCSVGSLSLILKEPKYRSYLAIVSPTLSC.

2 disordered regions span residues 1-34 (MVRH…HPSR) and 51-81 (ASAE…ILPD). Composition is skewed to polar residues over residues 10 to 19 (PKTTNPNPES) and 61 to 76 (QNLS…THQS).

This sequence belongs to the UPF0328 family.

This Encephalitozoon cuniculi (strain GB-M1) (Microsporidian parasite) protein is UPF0328 protein ECU06_0030/ECU06_1690/ECU11_0020.